Consider the following 745-residue polypeptide: MSHFKYRNQTTDICNAAALDAFAMYSNYSVPLALLFALLLSFQTARALKAADEYAVSPDLIPGLSQAEDRALVPTMHAGHIPLDENNDEHTKNYFFWKFHDESGSASGPARDTLIFWLNGGPGCSSMDGALMESGALRIDSDGKAYLNRGGWHTRGDIVFVDQPAGTGFSTVASDNDYDNDLKVVSEHFVAFLRNYFQVFPDDAGKQVVFAGESYAGQFIPYFARAVLDQDEVQVNLQALLIGNGWIDPNQQSLYYIPFAVEKGLITQDDPSFSYLLKQQENCQNKINSKENDRFSFKECENILNNLLEVTRKIKDSEGKKVPSDQQCINMYDLRLKDSYPSCGMNWPQDLPNLGKFFGTEGVLEALHLDPEHVSQWHECDDKVSNYLKNPDSRASAAILPGLLEAGLEVMLFNGDQDIICNNMGVEAVISQMSWGGETGFSENVQLYDWVYRSPENSEITPAGFVKYDRNLTFMSVYNASHMVPFDNALVSRGVVDLFLNDVDLVQIDGRDTLITDDVNKGKDGDASETDDTTELDCEGKDKLSEECKQLNASKGQNGESDKDEGEKGNEEDDNDDTEDGKKDAGDEKDDGEKDDDEKDGDEKDGDEKDEEDDDDKDENEKDEEDDDKDGDKPEGKNNDGAEDEDDDHNSGSHLAVTMICLLVSGTIIGGLYFTFRDRFRPRLRAILVDPTNRSEASKKTVSWAADLEQDAADLSNPENGAKKKGPYTSVPTQESRDSFELDNL.

The first 47 residues, 1-47, serve as a signal peptide directing secretion; it reads MSHFKYRNQTTDICNAAALDAFAMYSNYSVPLALLFALLLSFQTARA. Residues 48–655 are Lumenal-facing; sequence LKAADEYAVS…DDDHNSGSHL (608 aa). Catalysis depends on residues Ser-214 and Asp-418. N-linked (GlcNAc...) asparagine glycans are attached at residues Asn-471 and Asn-479. The active site involves His-482. Residues 515–526 show a composition bias toward basic and acidic residues; that stretch reads ITDDVNKGKDGD. The segment at 515 to 651 is disordered; that stretch reads ITDDVNKGKD…AEDEDDDHNS (137 aa). The span at 527 to 537 shows a compositional bias: acidic residues; it reads ASETDDTTELD. A compositionally biased stretch (basic and acidic residues) spans 538–549; it reads CEGKDKLSEECK. N-linked (GlcNAc...) asparagine glycosylation is present at Asn-552. Acidic residues-rich tracts occupy residues 570–579 and 587–629; these read NEEDDNDDTE and DEKD…DDDK. Basic and acidic residues predominate over residues 630–640; sequence DGDKPEGKNND. A helical transmembrane segment spans residues 656–676; that stretch reads AVTMICLLVSGTIIGGLYFTF. At 677–745 the chain is on the cytoplasmic side; sequence RDRFRPRLRA…SRDSFELDNL (69 aa). The tract at residues 709–745 is disordered; the sequence is EQDAADLSNPENGAKKKGPYTSVPTQESRDSFELDNL. A compositionally biased stretch (basic and acidic residues) spans 735-745; it reads ESRDSFELDNL.

Belongs to the peptidase S10 family.

Its subcellular location is the golgi apparatus. It localises to the trans-Golgi network membrane. The catalysed reaction is Preferential release of a C-terminal arginine or lysine residue.. Its function is as follows. Protease with a carboxypeptidase B-like function involved in the C-terminal processing of the lysine and arginine residues from protein precursors. Promotes cell fusion and is involved in the programmed cell death. In Lachancea thermotolerans (strain ATCC 56472 / CBS 6340 / NRRL Y-8284) (Yeast), this protein is Pheromone-processing carboxypeptidase KEX1 (KEX1).